The sequence spans 149 residues: Endoribonuclease YbeY (149 aa).

3 residues coordinate Zn(2+): His115, His119, and His125.

The protein belongs to the endoribonuclease YbeY family. Requires Zn(2+) as cofactor.

Its subcellular location is the cytoplasm. In terms of biological role, single strand-specific metallo-endoribonuclease involved in late-stage 70S ribosome quality control and in maturation of the 3' terminus of the 16S rRNA. This chain is Endoribonuclease YbeY, found in Mycoplasmopsis pulmonis (strain UAB CTIP) (Mycoplasma pulmonis).